The sequence spans 571 residues: Protein PNS1 (571 aa).

The interval 1–96 (MNDEEKHLAA…PDFPPDYNYK (96 aa)) is disordered. At 1 to 118 (MNDEEKHLAA…AVPKPKWNDK (118 aa)) the chain is on the cytoplasmic side. Positions 15-31 (YQPNMHYQQQQEKQTGY) are enriched in polar residues. 2 stretches are compositionally biased toward low complexity: residues 39–52 (QGGY…DYYN) and 71–80 (GNPNDNYNNQ). The span at 81–90 (QPPPYTPDFP) shows a compositional bias: pro residues. A helical membrane pass occupies residues 119-139 (IGLVILALIFSGYLALSIIVI). The Extracellular segment spans residues 140–166 (RAYAQTHSFQGWGIYSGENDYSLNTHT). A helical membrane pass occupies residues 167–187 (LILYAFVLATAMVLSLLYFIA). Residues 188–189 (AR) are Cytoplasmic-facing. A helical membrane pass occupies residues 190 to 210 (VWTKQFIWITYILHLLFSWGT). Residue Ala-211 is a topological domain, extracellular. A helical membrane pass occupies residues 212–232 (IYYLVVGYYSAGIVFIVFAAL). Topologically, residues 233-263 (TTWWFWCSRKRIPFATIVLQTLIDVTRANPS) are cytoplasmic. A helical membrane pass occupies residues 264-284 (VLVISAVGTVVGACFGTWFSF). Residues 285 to 311 (TIVSIYVKYDPDNRNPGCMTTGGSCSN) lie on the Extracellular side of the membrane. The chain crosses the membrane as a helical span at residues 312–332 (GKLIGLILFAIFCGYYLTEVI). Residues 333–369 (KNVIHVTISGVYGSWYYCSKSDQGMPKHAAMSSFRRA) lie on the Cytoplasmic side of the membrane. Residues 370-390 (VTYSLGSISLGSLIVSIINFI) form a helical membrane-spanning segment. Topologically, residues 391–406 (RQILSVLQQDARQSGD) are extracellular. A helical membrane pass occupies residues 407-427 (TLATVLLCFVQCCFGVLDWLV). Over 428–472 (TYFNHYAYSYIALYGKAYVPSAKATWKLMQTRGIDAMVNDSLIGS) the chain is Cytoplasmic. Residues 473–493 (VLSFGASFVAYAAALVAYCFL) traverse the membrane as a helical segment. Topologically, residues 494-503 (KYTDPSYNSG) are extracellular. A helical membrane pass occupies residues 504–524 (GGFYAPVVGLAFVIALQVSNI). The Cytoplasmic portion of the chain corresponds to 525 to 571 (TNVSLKSGCSTFFLALARDPEVLRVSYPQIYEEICRTYPPARDKLDI).

This sequence belongs to the CTL (choline transporter-like) family.

The protein resides in the cell membrane. In terms of biological role, probably involved in transport through the plasma membrane. This Yarrowia lipolytica (strain CLIB 122 / E 150) (Yeast) protein is Protein PNS1 (PNS1).